Reading from the N-terminus, the 497-residue chain is Putative zinc finger and SCAN domain-containing protein 5D (497 aa).

Residues 41 to 123 (KAGRRMFSCP…DLLRNNRRPK (83 aa)) form the SCAN box domain. A disordered region spans residues 148 to 342 (PASVRDDPRG…GPAGAVSHPN (195 aa)). Over residues 158–167 (VSSQRASSVN) the composition is skewed to polar residues. Composition is skewed to basic and acidic residues over residues 216-229 (PTLE…REEN) and 249-259 (KEGKEPKKRAS). C2H2-type zinc fingers lie at residues 352–374 (FACG…MRSH), 380–402 (FQCN…QRIH), 408–430 (YTCD…KRSH), 436–458 (YKCK…KLIH), and 464–486 (YKCP…QKTH).

It is found in the nucleus. This Homo sapiens (Human) protein is Putative zinc finger and SCAN domain-containing protein 5D.